Reading from the N-terminus, the 978-residue chain is MSSLDRKKPQNRSKNNYYNICLKEKGSEELTCEEHARIIFDGLYEFVGLLDAHGNVLEVNQVALEGAGITLEEIRGKPFWKARWWQISKKTEATQKRLVETASSGEFVRCDVEILGKSGGREVIAVDFSLLPICNEEGSIVYLLAEGRNITDKKKAEAMLALKNQELEQSVERIRKLDNAKSDFFAKVSHELRTPLSLILGPLEAVMAAEAGRESPYWKQFEVIQRNAMTLLKQVNTLLDLAKMDARQMGLSYRRANLSQLTRTISSNFEGIAQQKSITFDTKLPVQMVAEVDCEKYERIILNLLSNAFKFTPDGGLIRCCLSLSRPNYALVTVSDSGPGIPPALRKEIFERFHQLSQEGQQATRGTGLGLSIVKEFVELHRGTISVSDAPGGGALFQVKLPLNAPEGAYVASNTAPRRDNPQVVDTDEYLLLAPNAENEAEVLPFQSDQPRVLIVEDNPDMRGFIKDCLSSDYQVYVAPDGAKALELMSNMPPDLLITDLMMPVMSGDMLVHQVRKKNELSHIPIMVLSAKSDAELRVKLLSESVQDFLLKPFSAHELRARVSNLVSMKVAGDALRKELSDQGDDIAILTHRLIKSRHRLQQSNIALSASEARWKAVYENSAAGIVLTDPENRILNANPAFQRITGYGEKDLEGLSMEQLTPSDESPQIKQRLANLLQGGGAEYSVERSYLCKNGSTIWANASVSLMPQRVGESPVILQIIDDITEKKQAQENLNQLQQQLVYVSRSATMGEFAAYIAHEINQPLSAIMTNANAGTRWLGNEPSNIPEAKEALARIIRDSDRAAEIIRMVRSFLKRQETVLKPIDLKALVTDTSLILKAPSQNNSVNLDVVADDELPEIWGDGVQIQQLIINLAMNAIEAISQADCETRQLTLSFSGNDTGDALVISVKDTGPGISERQMAQLFNAFYTTKKEGLGMGLAICLTITEVHNGKIWVECPPAGGACFLVSIPARQGSGT.

One can recognise a PAS 1 domain in the interval 32–103 (CEEHARIIFD…TQKRLVETAS (72 aa)). Residues 108-162 (VRCDVEILGKSGGREVIAVDFSLLPICNEEGSIVYLLAEGRNITDKKKAEAMLAL) enclose the PAC 1 domain. Residues 187-405 (KVSHELRTPL…LFQVKLPLNA (219 aa)) enclose the Histidine kinase 1 domain. Phosphohistidine; by autocatalysis is present on histidine 190. The 116-residue stretch at 452 to 567 (RVLIVEDNPD…ELRARVSNLV (116 aa)) folds into the Response regulatory domain. At aspartate 500 the chain carries 4-aspartylphosphate. The PAS 2 domain occupies 611–681 (SEARWKAVYE…QRLANLLQGG (71 aa)). Positions 685–737 (YSVERSYLCKNGSTIWANASVSLMPQRVGESPVILQIIDDITEKKQAQENLNQ) constitute a PAC 2 domain. Positions 757–974 (YIAHEINQPL…CFLVSIPARQ (218 aa)) constitute a Histidine kinase 2 domain. Histidine 760 is subject to Phosphohistidine.

Post-translationally, autophosphorylated. Activation requires a sequential transfer of a phosphate group from a His in the primary transmitter domain, to an Asp in the receiver domain and to a His in the secondary transmitter domain.

The protein localises to the cytoplasm. It catalyses the reaction ATP + protein L-histidine = ADP + protein N-phospho-L-histidine.. Activity is regulated by agonists and antagonists. Binding of agonists such as toluene or benzene to TodS stimulates autophosphorylation at His-190. Activity is inhibited by antagonists such as o-xylene, o-chlorotoluene and trimethylbenzene isomers, which bind to TodS but do not stimulate autophosphorylation. Agonists and antagonists bind to the same PAS domain. Its function is as follows. Member of the two-component regulatory system TodS/TodT involved in the regulation of toluene degradation. Phosphorylates TodT via a four-step phosphorelay in response to toluene. Can also be induced by benzene and ethylbenzene. In Pseudomonas putida (strain DOT-T1E), this protein is Sensor histidine kinase TodS (todS).